Here is a 107-residue protein sequence, read N- to C-terminus: Iron-binding protein IscA (107 aa).

Positions 35, 99, and 101 each coordinate Fe cation.

It belongs to the HesB/IscA family. As to quaternary structure, homodimer; may form tetramers and higher multimers. It depends on Fe cation as a cofactor.

In terms of biological role, is able to transfer iron-sulfur clusters to apo-ferredoxin. Multiple cycles of [2Fe2S] cluster formation and transfer are observed, suggesting that IscA acts catalytically. Recruits intracellular free iron so as to provide iron for the assembly of transient iron-sulfur cluster in IscU in the presence of IscS, L-cysteine and the thioredoxin reductase system TrxA/TrxB. This chain is Iron-binding protein IscA, found in Salmonella agona (strain SL483).